Consider the following 155-residue polypeptide: NADH-ubiquinone oxidoreductase chain 6 (155 aa).

4 helical membrane-spanning segments follow: residues 10–30, 43–63, 75–95, and 133–153; these read ILAI…VLFV, LMGI…FLFI, GTIH…LDLS, and AIPM…AIAI.

It belongs to the complex I subunit 6 family.

Its subcellular location is the mitochondrion membrane. The catalysed reaction is a ubiquinone + NADH + 5 H(+)(in) = a ubiquinol + NAD(+) + 4 H(+)(out). In terms of biological role, core subunit of the mitochondrial membrane respiratory chain NADH dehydrogenase (Complex I) that is believed to belong to the minimal assembly required for catalysis. Complex I functions in the transfer of electrons from NADH to the respiratory chain. The immediate electron acceptor for the enzyme is believed to be ubiquinone. The chain is NADH-ubiquinone oxidoreductase chain 6 (ND6) from Candida parapsilosis (Yeast).